The primary structure comprises 279 residues: Uroplakin-3b (279 aa).

The signal sequence occupies residues 1–26 (MGLPSRQPRLWLLLLVVLGWPQPCLT). The Lumenal portion of the chain corresponds to 27-200 (LDLIPYTPRI…DTWPGRRSGD (174 aa)). The N-linked (GlcNAc...) asparagine glycan is linked to N77. A helical transmembrane segment spans residues 201–221 (MIIITSILSSLAGLLLLAFLA). Topologically, residues 222-279 (ASSVRFSSLWWPEEAPEQLRIGSFMGKRYMTHHIPPSEAATLPVGCEPGLERFPSLSP) are cytoplasmic.

It belongs to the uroplakin-3 family. In terms of assembly, heterodimer with uroplakin-1B (UPK1B). Expression is urothelium-specific.

Its subcellular location is the cell membrane. In terms of biological role, component of the asymmetric unit membrane (AUM); a highly specialized biomembrane elaborated by terminally differentiated urothelial cells. May play an important role in AUM-cytoskeleton interaction in terminally differentiated urothelial cells. It also contributes to the formation of urothelial glycocalyx which may play an important role in preventing bacterial adherence. The polypeptide is Uroplakin-3b (UPK3B) (Bos taurus (Bovine)).